A 100-amino-acid chain; its full sequence is Aspartyl/glutamyl-tRNA(Asn/Gln) amidotransferase subunit C (100 aa).

This sequence belongs to the GatC family. Heterotrimer of A, B and C subunits.

It catalyses the reaction L-glutamyl-tRNA(Gln) + L-glutamine + ATP + H2O = L-glutaminyl-tRNA(Gln) + L-glutamate + ADP + phosphate + H(+). It carries out the reaction L-aspartyl-tRNA(Asn) + L-glutamine + ATP + H2O = L-asparaginyl-tRNA(Asn) + L-glutamate + ADP + phosphate + 2 H(+). Functionally, allows the formation of correctly charged Asn-tRNA(Asn) or Gln-tRNA(Gln) through the transamidation of misacylated Asp-tRNA(Asn) or Glu-tRNA(Gln) in organisms which lack either or both of asparaginyl-tRNA or glutaminyl-tRNA synthetases. The reaction takes place in the presence of glutamine and ATP through an activated phospho-Asp-tRNA(Asn) or phospho-Glu-tRNA(Gln). In Streptococcus thermophilus (strain ATCC BAA-491 / LMD-9), this protein is Aspartyl/glutamyl-tRNA(Asn/Gln) amidotransferase subunit C.